A 454-amino-acid chain; its full sequence is Caspase-9 (454 aa).

One can recognise a CARD domain in the interval 1 to 92 (MDEADRQLLR…GTLASLLQSG (92 aa)). Thr163 bears the Phosphothreonine; by MAPK1 mark. At Tyr191 the chain carries Phosphotyrosine; by ABL1. Catalysis depends on residues His275 and Cys325. Phosphoserine is present on residues Ser340 and Ser348. The propeptide occupies 354–367 (AVPYQEGPRPLDQL).

The protein belongs to the peptidase C14A family. In terms of assembly, heterotetramer that consists of two anti-parallel arranged heterodimers, each one formed by a 35 kDa (p35) and a 10 kDa (p10) subunit. Caspase-9 and APAF1 bind to each other via their respective NH2-terminal CED-3 homologous domains in the presence of cytochrome C and ATP. Interacts (inactive form) with EFHD2. Interacts with HAX1. Interacts with BIRC2/c-IAP1, XIAP/BIRC4, BIRC5/survivin, BIRC6/bruce and BIRC7/livin. Interacts with ABL1 (via SH3 domain); the interaction is direct and increased in the response of cells to genotoxic stress and ABL1/c-Abl activation. Interacts with BCL2L10. Cleavages at Asp-353 by granzyme B and at Asp-368 by caspase-3 generate the two active subunits. Caspase-8 and -10 can also be involved in these processing events. Post-translationally, phosphorylated at Thr-163 by MAPK1/ERK2. Phosphorylation at Thr-163 is sufficient to block caspase-9 processing and subsequent caspase-3 activation. Phosphorylation on Tyr-191 by ABL1/c-Abl; occurs in the response of cells to DNA damage. In terms of processing, ubiquitinated by BIRC6; this activity is inhibited by DIABLO/SMAC.

The catalysed reaction is Strict requirement for an Asp residue at position P1 and with a marked preference for His at position P2. It has a preferred cleavage sequence of Leu-Gly-His-Asp-|-Xaa.. Its activity is regulated as follows. Inhibited by BIRC6; following inhibition of BIRC6-caspase binding by DIABLO/SMAC, BIRC6 is subjected to caspase cleavage, leading to an increase in active caspases. Functionally, involved in the activation cascade of caspases responsible for apoptosis execution. Binding of caspase-9 to Apaf-1 leads to activation of the protease which then cleaves and activates effector caspases caspase-3 (CASP3) or caspase-7 (CASP7). Promotes DNA damage-induced apoptosis in a ABL1/c-Abl-dependent manner. Proteolytically cleaves poly(ADP-ribose) polymerase (PARP). Cleaves BIRC6 following inhibition of BIRC6-caspase binding by DIABLO/SMAC. In Mus musculus (Mouse), this protein is Caspase-9 (Casp9).